The sequence spans 67 residues: UPF0434 protein Tcr_0959 (67 aa).

The protein belongs to the UPF0434 family.

This chain is UPF0434 protein Tcr_0959, found in Hydrogenovibrio crunogenus (strain DSM 25203 / XCL-2) (Thiomicrospira crunogena).